Reading from the N-terminus, the 134-residue chain is Ribosome-binding factor A (134 aa).

Belongs to the RbfA family. Monomer. Binds 30S ribosomal subunits, but not 50S ribosomal subunits or 70S ribosomes.

The protein localises to the cytoplasm. Functionally, one of several proteins that assist in the late maturation steps of the functional core of the 30S ribosomal subunit. Associates with free 30S ribosomal subunits (but not with 30S subunits that are part of 70S ribosomes or polysomes). Required for efficient processing of 16S rRNA. May interact with the 5'-terminal helix region of 16S rRNA. The polypeptide is Ribosome-binding factor A (Parasynechococcus marenigrum (strain WH8102)).